A 241-amino-acid polypeptide reads, in one-letter code: MEFDPAKINTSSIDHVTILQYIDEPNDIRLPVCIIRNINNITYFINITKINPDLANQFRAWKKRIAGRDYMTNLSRDTGIQQSKLTETIRNCQKNRNIYGLYIHYNLVINVVIDWITDVIVQSILRGLVNWYIANNTYNPNTPNSTTISELDIIKILDKYEDVYRVSKEKECGICYEVVYSKRLENDRYFGLLDSCNHIFCITCINIWHRTRRETGASDNCPICRTRFRNITMSKFYKLVN.

In terms of domain architecture, KilA-N spans 21–131; it reads YIDEPNDIRL…QSILRGLVNW (111 aa). An RING-type zinc finger spans residues 172–225; that stretch reads CGICYEVVYSKRLENDRYFGLLDSCNHIFCITCINIWHRTRRETGASDNCPICR.

The protein belongs to the orthopoxvirus OPG021 family.

The protein localises to the host cytoplasm. The enzyme catalyses S-ubiquitinyl-[E2 ubiquitin-conjugating enzyme]-L-cysteine + [acceptor protein]-L-lysine = [E2 ubiquitin-conjugating enzyme]-L-cysteine + N(6)-ubiquitinyl-[acceptor protein]-L-lysine.. Functionally, RING-finger E3 ubiquitin ligase which catalyzes the formation of both 'Lys-48'- and 'Lys-63'-linked polyubiquitin chains. Plays an important role in virulence by acting as an anti-apoptotic factor. In Ectromelia virus (strain Moscow) (ECTV), this protein is Host range factor p28 (OPG021).